Reading from the N-terminus, the 155-residue chain is Large ribosomal subunit protein eL24 (155 aa).

The span at 94 to 129 shows a compositional bias: basic and acidic residues; sequence RSLKPEVRKAQRDEKKKADKEKKKADKAARKSEKAK. Residues 94 to 155 are disordered; it reads RSLKPEVRKA…AFQKVAATSR (62 aa).

This sequence belongs to the eukaryotic ribosomal protein eL24 family.

In Kluyveromyces lactis (strain ATCC 8585 / CBS 2359 / DSM 70799 / NBRC 1267 / NRRL Y-1140 / WM37) (Yeast), this protein is Large ribosomal subunit protein eL24 (RPL24).